The following is a 441-amino-acid chain: Ribosomal protein uS12 methylthiotransferase RimO (441 aa).

The MTTase N-terminal domain maps to 8 to 118 (PKIGFVSLGC…VLEHVHHYVP (111 aa)). [4Fe-4S] cluster-binding residues include C17, C53, C82, C150, C154, and C157. The Radical SAM core domain occupies 136-373 (LTPRHYAYLK…MQLQQQISAE (238 aa)). One can recognise a TRAM domain in the interval 376–441 (QEKVGREILV…DEYDLWGSRV (66 aa)).

Belongs to the methylthiotransferase family. RimO subfamily. [4Fe-4S] cluster is required as a cofactor.

It is found in the cytoplasm. It catalyses the reaction L-aspartate(89)-[ribosomal protein uS12]-hydrogen + (sulfur carrier)-SH + AH2 + 2 S-adenosyl-L-methionine = 3-methylsulfanyl-L-aspartate(89)-[ribosomal protein uS12]-hydrogen + (sulfur carrier)-H + 5'-deoxyadenosine + L-methionine + A + S-adenosyl-L-homocysteine + 2 H(+). Catalyzes the methylthiolation of an aspartic acid residue of ribosomal protein uS12. In Shigella flexneri, this protein is Ribosomal protein uS12 methylthiotransferase RimO.